Reading from the N-terminus, the 359-residue chain is Peroxisome assembly protein 12 (359 aa).

Topologically, residues 1–19 (MAEHGAHFTAASVADDQPS) are peroxisomal matrix. A helical transmembrane segment spans residues 20 to 47 (IFEVVAQDSLMTAVRPALQHVVKVLAES). The Cytoplasmic portion of the chain corresponds to 48-51 (NPTH). A helical transmembrane segment spans residues 52–76 (YGFLWRWFDEIFTLLDLLLQQHYLS). Over 77–109 (RTSASFSENFYGLKRIVMGDTHKSQRLASAGLP) the chain is Peroxisomal matrix. A helical membrane pass occupies residues 110–139 (KQQLWKSIMFLVLLPYLKVKLEKLVSSLRE). At 140–144 (EDEYS) the chain is on the cytoplasmic side. The chain crosses the membrane as a helical span at residues 145–183 (IHPPSSRWKRFYRAFLAAYPFVNMAWEGWFLVQQLRYIL). The Peroxisomal matrix portion of the chain corresponds to 184-249 (GKAQHHSPLL…VGGVALSLST (66 aa)). Residues 250-277 (GLSVGVFFLQFLDWWYSSENQETIKSLT) traverse the membrane as a helical segment. The Cytoplasmic segment spans residues 278–359 (ALPTPPPPVH…HLIKLYSPEN (82 aa)). Zn(2+) contacts are provided by Cys304, Cys307, Cys325, and Cys328. The RING-type; degenerate zinc finger occupies 304-343 (CPLCRKTRVNDTVLATSGYVFCYRCVFHYVRSHQACPITG).

Belongs to the pex2/pex10/pex12 family. As to quaternary structure, component of the PEX2-PEX10-PEX12 retrotranslocation channel, composed of PEX2, PEX10 and PEX12. Interacts with PEX19 via its cytoplasmic domain.

The protein localises to the peroxisome membrane. It functions in the pathway protein modification; protein ubiquitination. In terms of biological role, component of a retrotranslocation channel required for peroxisome organization by mediating export of the PEX5 receptor from peroxisomes to the cytosol, thereby promoting PEX5 recycling. The retrotranslocation channel is composed of PEX2, PEX10 and PEX12; each subunit contributing transmembrane segments that coassemble into an open channel that specifically allows the passage of PEX5 through the peroxisomal membrane. PEX12 also regulates PEX5 recycling by activating the E3 ubiquitin-protein ligase activity of PEX10. When PEX5 recycling is compromised, PEX12 stimulates PEX10-mediated polyubiquitination of PEX5, leading to its subsequent degradation. The sequence is that of Peroxisome assembly protein 12 from Homo sapiens (Human).